The sequence spans 274 residues: 4-hydroxy-tetrahydrodipicolinate reductase (274 aa).

12-17 (GAAGRM) serves as a coordination point for NAD(+). Residue R39 participates in NADP(+) binding. NAD(+) is bound by residues 102 to 104 (GTT) and 126 to 129 (SGNM). The active-site Proton donor/acceptor is H160. Residue H161 participates in (S)-2,3,4,5-tetrahydrodipicolinate binding. The active-site Proton donor is K164. 170 to 171 (GT) serves as a coordination point for (S)-2,3,4,5-tetrahydrodipicolinate.

Belongs to the DapB family.

It is found in the cytoplasm. The catalysed reaction is (S)-2,3,4,5-tetrahydrodipicolinate + NAD(+) + H2O = (2S,4S)-4-hydroxy-2,3,4,5-tetrahydrodipicolinate + NADH + H(+). It catalyses the reaction (S)-2,3,4,5-tetrahydrodipicolinate + NADP(+) + H2O = (2S,4S)-4-hydroxy-2,3,4,5-tetrahydrodipicolinate + NADPH + H(+). It participates in amino-acid biosynthesis; L-lysine biosynthesis via DAP pathway; (S)-tetrahydrodipicolinate from L-aspartate: step 4/4. Functionally, catalyzes the conversion of 4-hydroxy-tetrahydrodipicolinate (HTPA) to tetrahydrodipicolinate. In Rhizobium rhizogenes (strain K84 / ATCC BAA-868) (Agrobacterium radiobacter), this protein is 4-hydroxy-tetrahydrodipicolinate reductase.